A 142-amino-acid polypeptide reads, in one-letter code: Hemoglobin subunit alpha (142 aa).

One can recognise a Globin domain in the interval 2–142 (VLSPDDKKHV…VSTVLTSKYR (141 aa)). Ser-4 carries the phosphoserine modification. N6-succinyllysine occurs at positions 8 and 12. Lys-17 carries the post-translational modification N6-acetyllysine; alternate. At Lys-17 the chain carries N6-succinyllysine; alternate. Tyr-25 is modified (phosphotyrosine). At Ser-36 the chain carries Phosphoserine. An N6-succinyllysine modification is found at Lys-41. Ser-50 bears the Phosphoserine mark. Residue His-59 coordinates O2. His-88 contacts heme b. Ser-103 carries the phosphoserine modification. Phosphothreonine is present on Thr-109. A phosphoserine mark is found at Ser-125 and Ser-132. A phosphothreonine mark is found at Thr-135 and Thr-138. Ser-139 is modified (phosphoserine).

This sequence belongs to the globin family. Heterotetramer of two alpha chains and two beta chains. Red blood cells.

Functionally, involved in oxygen transport from the lung to the various peripheral tissues. Hemopressin acts as an antagonist peptide of the cannabinoid receptor CNR1. Hemopressin-binding efficiently blocks cannabinoid receptor CNR1 and subsequent signaling. This is Hemoglobin subunit alpha (HBA) from Papio anubis (Olive baboon).